Here is a 271-residue protein sequence, read N- to C-terminus: S-adenosylmethionine decarboxylase proenzyme (271 aa).

Ser-121 functions as the Schiff-base intermediate with substrate; via pyruvic acid in the catalytic mechanism. Pyruvic acid (Ser); by autocatalysis is present on Ser-121. The active-site Proton acceptor; for processing activity is the His-126. Cys-149 (proton donor; for catalytic activity) is an active-site residue.

Belongs to the prokaryotic AdoMetDC family. Type 2 subfamily. Heterooctamer of four alpha and four beta chains arranged as a tetramer of alpha/beta heterodimers. Requires pyruvate as cofactor. Post-translationally, is synthesized initially as an inactive proenzyme. Formation of the active enzyme involves a self-maturation process in which the active site pyruvoyl group is generated from an internal serine residue via an autocatalytic post-translational modification. Two non-identical subunits are generated from the proenzyme in this reaction, and the pyruvate is formed at the N-terminus of the alpha chain, which is derived from the carboxyl end of the proenzyme. The post-translation cleavage follows an unusual pathway, termed non-hydrolytic serinolysis, in which the side chain hydroxyl group of the serine supplies its oxygen atom to form the C-terminus of the beta chain, while the remainder of the serine residue undergoes an oxidative deamination to produce ammonia and the pyruvoyl group blocking the N-terminus of the alpha chain.

It carries out the reaction S-adenosyl-L-methionine + H(+) = S-adenosyl 3-(methylsulfanyl)propylamine + CO2. The protein operates within amine and polyamine biosynthesis; S-adenosylmethioninamine biosynthesis; S-adenosylmethioninamine from S-adenosyl-L-methionine: step 1/1. Its function is as follows. Catalyzes the decarboxylation of S-adenosylmethionine to S-adenosylmethioninamine (dcAdoMet), the propylamine donor required for the synthesis of the polyamines spermine and spermidine from the diamine putrescine. The chain is S-adenosylmethionine decarboxylase proenzyme from Clostridium perfringens (strain SM101 / Type A).